Here is a 502-residue protein sequence, read N- to C-terminus: Glycerol kinase (502 aa).

Position 14 (threonine 14) interacts with ADP. ATP-binding residues include threonine 14, threonine 15, and serine 16. Sn-glycerol 3-phosphate is bound at residue threonine 14. Arginine 18 serves as a coordination point for ADP. Positions 84, 85, 136, and 246 each coordinate sn-glycerol 3-phosphate. Arginine 84, glutamate 85, tyrosine 136, aspartate 246, and glutamine 247 together coordinate glycerol. ADP is bound by residues threonine 268 and glycine 311. ATP contacts are provided by threonine 268, glycine 311, glutamine 315, and glycine 412. ADP-binding residues include glycine 412 and asparagine 416.

Belongs to the FGGY kinase family. In terms of assembly, homotetramer and homodimer (in equilibrium). Heterodimer with EIIA-Glc. Binds 1 zinc ion per glycerol kinase EIIA-Glc dimer. The zinc ion is important for dimerization.

The catalysed reaction is glycerol + ATP = sn-glycerol 3-phosphate + ADP + H(+). It functions in the pathway polyol metabolism; glycerol degradation via glycerol kinase pathway; sn-glycerol 3-phosphate from glycerol: step 1/1. Activity of this regulatory enzyme is affected by several metabolites. Allosterically and non-competitively inhibited by fructose 1,6-bisphosphate (FBP) and unphosphorylated phosphocarrier protein EIIA-Glc (III-Glc), an integral component of the bacterial phosphotransferase (PTS) system. Key enzyme in the regulation of glycerol uptake and metabolism. Catalyzes the phosphorylation of glycerol to yield sn-glycerol 3-phosphate. This is Glycerol kinase from Escherichia coli O127:H6 (strain E2348/69 / EPEC).